The following is a 39-amino-acid chain: Cytochrome b559 subunit beta (39 aa).

Residues 14 to 30 (WLAVHGLAVPTVFFLGA) traverse the membrane as a helical segment. His18 is a binding site for heme.

Belongs to the PsbE/PsbF family. Heterodimer of an alpha subunit and a beta subunit. PSII is composed of 1 copy each of membrane proteins PsbA, PsbB, PsbC, PsbD, PsbE, PsbF, PsbH, PsbI, PsbJ, PsbK, PsbL, PsbM, PsbT, PsbX, PsbY, PsbZ, Psb30/Ycf12, at least 3 peripheral proteins of the oxygen-evolving complex and a large number of cofactors. It forms dimeric complexes. Requires heme b as cofactor.

The protein resides in the plastid. It localises to the chloroplast thylakoid membrane. Functionally, this b-type cytochrome is tightly associated with the reaction center of photosystem II (PSII). PSII is a light-driven water:plastoquinone oxidoreductase that uses light energy to abstract electrons from H(2)O, generating O(2) and a proton gradient subsequently used for ATP formation. It consists of a core antenna complex that captures photons, and an electron transfer chain that converts photonic excitation into a charge separation. In Physcomitrium patens (Spreading-leaved earth moss), this protein is Cytochrome b559 subunit beta.